A 109-amino-acid polypeptide reads, in one-letter code: MFGKGGLGGLMKQAQQMQEKMQKMQEEIAQLEVTGESGAGLVKIAINGAHNCRRIDIDPSLMEDDKEMLEDLIAAAFNDAVRRAEELQKEKMASVTAGMPLPPGMKFPF.

This sequence belongs to the YbaB/EbfC family. As to quaternary structure, homodimer.

The protein localises to the cytoplasm. It is found in the nucleoid. Functionally, binds to DNA and alters its conformation. May be involved in regulation of gene expression, nucleoid organization and DNA protection. This chain is Nucleoid-associated protein CGSHiEE_00780, found in Haemophilus influenzae (strain PittEE).